A 122-amino-acid polypeptide reads, in one-letter code: MKLSIGIIFCFLILGVNSREWLTFLKEAGQGAKDMWRAYSDMKEANYKNSDKYFHARGNYDAAKRGPGGVWAAEVISDARENYQKLIGRGAEDSKADQEANQWGRSGNDPNHFRPKGLPDKY.

An N-terminal signal peptide occupies residues 1–18; that stretch reads MKLSIGIIFCFLILGVNS. Residues 88-122 form a disordered region; it reads GRGAEDSKADQEANQWGRSGNDPNHFRPKGLPDKY. A compositionally biased stretch (polar residues) spans 99–109; sequence EANQWGRSGND.

The protein belongs to the SAA family. Expressed by the liver; secreted in plasma. Expressed in synovial fibroblasts.

The protein resides in the secreted. Functionally, major acute phase reactant. Apolipoprotein of the HDL complex. In vitro exhibits antimicrobial activity against Escherichia coli, Streptococcus uberis and Pseudomonas aeruginosa. The chain is Serum amyloid A-3 protein (SAA3) from Oryctolagus cuniculus (Rabbit).